The following is a 509-amino-acid chain: GMP synthase [glutamine-hydrolyzing] (509 aa).

Residues 4–194 enclose the Glutamine amidotransferase type-1 domain; that stretch reads KVIVLDFGGQ…LYEICGLTPD (191 aa). Catalysis depends on cysteine 81, which acts as the Nucleophile. Residues histidine 168 and glutamate 170 contribute to the active site. The GMPS ATP-PPase domain maps to 195 to 384; it reads WTMESFAQKA…LGLPESIVWR (190 aa). ATP is bound at residue 222-228; sequence SGGVDSS.

As to quaternary structure, homodimer.

The enzyme catalyses XMP + L-glutamine + ATP + H2O = GMP + L-glutamate + AMP + diphosphate + 2 H(+). The protein operates within purine metabolism; GMP biosynthesis; GMP from XMP (L-Gln route): step 1/1. In terms of biological role, catalyzes the synthesis of GMP from XMP. The protein is GMP synthase [glutamine-hydrolyzing] of Carboxydothermus hydrogenoformans (strain ATCC BAA-161 / DSM 6008 / Z-2901).